Reading from the N-terminus, the 260-residue chain is Thiazole synthase (260 aa).

The Schiff-base intermediate with DXP role is filled by Lys-102. 1-deoxy-D-xylulose 5-phosphate contacts are provided by residues Gly-163, 189–190 (AG), and 211–212 (NT).

This sequence belongs to the ThiG family. Homotetramer. Forms heterodimers with either ThiH or ThiS.

Its subcellular location is the cytoplasm. It carries out the reaction [ThiS sulfur-carrier protein]-C-terminal-Gly-aminoethanethioate + 2-iminoacetate + 1-deoxy-D-xylulose 5-phosphate = [ThiS sulfur-carrier protein]-C-terminal Gly-Gly + 2-[(2R,5Z)-2-carboxy-4-methylthiazol-5(2H)-ylidene]ethyl phosphate + 2 H2O + H(+). It participates in cofactor biosynthesis; thiamine diphosphate biosynthesis. Functionally, catalyzes the rearrangement of 1-deoxy-D-xylulose 5-phosphate (DXP) to produce the thiazole phosphate moiety of thiamine. Sulfur is provided by the thiocarboxylate moiety of the carrier protein ThiS. In vitro, sulfur can be provided by H(2)S. The polypeptide is Thiazole synthase (Geobacter metallireducens (strain ATCC 53774 / DSM 7210 / GS-15)).